Reading from the N-terminus, the 284-residue chain is Deoxyribonuclease-1 (284 aa).

The signal sequence occupies residues 1-22 (MRAARLMGALLALAGLLQLALS). Residue asparagine 40 is glycosylated (N-linked (GlcNAc...) asparagine). The active site involves glutamate 100. Cysteines 123 and 126 form a disulfide. Asparagine 128 is a glycosylation site (N-linked (GlcNAc...) asparagine). Histidine 156 is a catalytic residue. Cysteines 195 and 231 form a disulfide.

It belongs to the DNase I family. Ca(2+) serves as cofactor. Requires Mg(2+) as cofactor.

It localises to the secreted. The protein resides in the zymogen granule. Its subcellular location is the nucleus envelope. The catalysed reaction is Endonucleolytic cleavage to 5'-phosphodinucleotide and 5'-phosphooligonucleotide end-products.. Serum endocuclease secreted into body fluids by a wide variety of exocrine and endocrine organs. Expressed by non-hematopoietic tissues and preferentially cleaves protein-free DNA. Among other functions, seems to be involved in cell death by apoptosis. Binds specifically to G-actin and blocks actin polymerization. Together with DNASE1L3, plays a key role in degrading neutrophil extracellular traps (NETs). NETs are mainly composed of DNA fibers and are released by neutrophils to bind pathogens during inflammation. Degradation of intravascular NETs by DNASE1 and DNASE1L3 is required to prevent formation of clots that obstruct blood vessels and cause organ damage following inflammation. The sequence is that of Deoxyribonuclease-1 (DNASE1) from Sus scrofa (Pig).